Reading from the N-terminus, the 732-residue chain is Polyribonucleotide nucleotidyltransferase (732 aa).

Mg(2+) is bound by residues Asp-483 and Asp-489. The region spanning 550–609 (PRIVTVQIPVDKIGELIGPKGKNIRGIQDETGAELSVEDDGTVTIAAVGGDSMERAKQMV) is the KH domain. Residues 619 to 687 (GETYEGTVKT…ERGRLRLSMK (69 aa)) form the S1 motif domain. A disordered region spans residues 684–732 (LSMKALLPKPEGMPDEPPQSERPRRDDGERSGGDRGGRGGRNGGGRDRR). Basic and acidic residues predominate over residues 702–720 (QSERPRRDDGERSGGDRGG).

It belongs to the polyribonucleotide nucleotidyltransferase family. Mg(2+) serves as cofactor.

The protein localises to the cytoplasm. The catalysed reaction is RNA(n+1) + phosphate = RNA(n) + a ribonucleoside 5'-diphosphate. Functionally, involved in mRNA degradation. Catalyzes the phosphorolysis of single-stranded polyribonucleotides processively in the 3'- to 5'-direction. This is Polyribonucleotide nucleotidyltransferase from Gemmatimonas aurantiaca (strain DSM 14586 / JCM 11422 / NBRC 100505 / T-27).